Consider the following 446-residue polypeptide: N-succinylarginine dihydrolase (446 aa).

Substrate-binding positions include 19 to 28 (AGLSFGNVAS), asparagine 110, and 137 to 138 (HR). Glutamate 174 is a catalytic residue. Arginine 213 serves as a coordination point for substrate. Residue histidine 249 is part of the active site. The substrate site is built by aspartate 251 and asparagine 364. Catalysis depends on cysteine 370, which acts as the Nucleophile.

It belongs to the succinylarginine dihydrolase family. Homodimer.

It catalyses the reaction N(2)-succinyl-L-arginine + 2 H2O + 2 H(+) = N(2)-succinyl-L-ornithine + 2 NH4(+) + CO2. The protein operates within amino-acid degradation; L-arginine degradation via AST pathway; L-glutamate and succinate from L-arginine: step 2/5. In terms of biological role, catalyzes the hydrolysis of N(2)-succinylarginine into N(2)-succinylornithine, ammonia and CO(2). This chain is N-succinylarginine dihydrolase, found in Burkholderia pseudomallei (strain 668).